The sequence spans 248 residues: 1-(5-phosphoribosyl)-5-[(5-phosphoribosylamino)methylideneamino] imidazole-4-carboxamide isomerase (248 aa).

Asp8 acts as the Proton acceptor in catalysis. Asp129 acts as the Proton donor in catalysis.

Belongs to the HisA/HisF family.

The protein resides in the cytoplasm. It catalyses the reaction 1-(5-phospho-beta-D-ribosyl)-5-[(5-phospho-beta-D-ribosylamino)methylideneamino]imidazole-4-carboxamide = 5-[(5-phospho-1-deoxy-D-ribulos-1-ylimino)methylamino]-1-(5-phospho-beta-D-ribosyl)imidazole-4-carboxamide. It functions in the pathway amino-acid biosynthesis; L-histidine biosynthesis; L-histidine from 5-phospho-alpha-D-ribose 1-diphosphate: step 4/9. The sequence is that of 1-(5-phosphoribosyl)-5-[(5-phosphoribosylamino)methylideneamino] imidazole-4-carboxamide isomerase from Rhizobium johnstonii (strain DSM 114642 / LMG 32736 / 3841) (Rhizobium leguminosarum bv. viciae).